We begin with the raw amino-acid sequence, 1453 residues long: Collagen alpha-1(I) chain (1453 aa).

Residues 1–22 (MFSFVDSRLLLLIAATVLLTRG) form the signal peptide. A propeptide spans 23-151 (EGEEDIQTGS…PPGLGGNFAP (129 aa)) (N-terminal propeptide). A VWFC domain is found at 31–89 (GSCVQDGLTYNDKDVWKPEPCQICVCDSGNILCDEVICEDTSDCPNAEIPFGECCPICP). The disordered stretch occupies residues 98–1203 (PESAGVEGPK…PQEKAHDGGR (1106 aa)). A compositionally biased stretch (basic and acidic residues) spans 106 to 116 (PKGDTGPRGDR). Positions 131–143 (PGLPGPPGPPGPP) are enriched in pro residues. Gln152 is subject to Pyrrolidone carboxylic acid. Lys160 carries the allysine modification. The segment covering 162–176 (AGVAVPGPMGPAGPR) has biased composition (low complexity). 4-hydroxyproline occurs at positions 179, 182, 185, 194, 197, 200, 215, 230, 236, 245, and 251. A compositionally biased stretch (low complexity) spans 187-206 (PQGFQGPPGEPGEPGASGPM). A 5-hydroxylysine; alternate modification is found at Lys254. O-linked (Gal...) hydroxylysine; partial glycosylation occurs at Lys254. Residues 265–284 (AKGQPGPAGPKGEPGSPGEN) show a composition bias toward low complexity. 4-hydroxyproline is present on residues Pro269, Pro278, Pro281, Pro287, Pro296, Pro302, Pro317, Pro323, Pro332, and Pro335. Residues 307 to 319 (PAGARGNDGAPGA) show a composition bias toward low complexity. Pro residues predominate over residues 320–334 (AGPPGPTGPAGPPGF). A compositionally biased stretch (low complexity) spans 350–361 (RGSEGPQGSRGE). 4-hydroxyproline is present on residues Pro362, Pro365, Pro377, Pro383, Pro392, Pro398, Pro401, and Pro416. The segment covering 368–418 (AGAAGPAGNPGADGQPGAKGATGAPGIAGAPGFPGARGPSGPQGPSGAPGP) has biased composition (low complexity). Lys419 bears the 5-hydroxylysine mark. 4-hydroxyproline occurs at positions 425, 428, 440, 449, 464, 470, 479, and 485. Over residues 463–482 (EPGPAGLPGPAGERGAPGSR) the composition is skewed to low complexity. Residue Lys494 is modified to 5-hydroxylysine. A 4-hydroxyproline mark is found at Pro497, Pro503, Pro512, Pro518, Pro524, Pro533, Pro536, Pro545, Pro554, Pro560, Pro572, Pro581, Pro584, Pro590, Pro593, Pro611, Pro629, Pro635, Pro641, Pro647, Pro653, Pro659, Pro671, Pro680, Pro692, Pro704, Pro707, Pro713, Pro719, Pro728, and Pro737. The span at 527–581 (KGLTGSPGSPGPDGKTGPPGPAGQDGRPGPAGPPGARGQAGVMGFPGPKGAAGEP) shows a compositional bias: low complexity. A compositionally biased stretch (low complexity) spans 623 to 664 (QGPAGAPGFQGLPGPAGPPGEAGKPGEQGVPGNAGAPGPAGA). A compositionally biased stretch (low complexity) spans 685-722 (PRGANGAPGNDGAKGDAGAPGAPGNEGPPGLEGMPGER). Lys740 carries the 5-hydroxylysine modification. Pro746, Pro761, Pro767, Pro776, Pro788, Pro794, Pro797, Pro806, Pro812, Pro830, Pro839, and Pro848 each carry 4-hydroxyproline. The segment covering 800–827 (AGFAGPPGADGQPGAKGETGDAGAKGDA) has biased composition (low complexity). Residues 835-883 (PTGAPGPAGZVGAPGPKGARGSAGPPGATGFPGAAGRVGPPGPSGNIGL) show a composition bias toward low complexity. Lys851 bears the 5-hydroxylysine mark. A 4-hydroxyproline mark is found at Pro860 and Pro866. Position 874 is a 3-hydroxyproline (Pro874). 4-hydroxyproline occurs at positions 875, 884, 887, 908, 911, 917, 920, 926, 935, 953, 962, 965, 971, 986, 992, 998, 1007, and 1013. Over residues 890 to 908 (AGKZGSKGPRGETGPAGRP) the composition is skewed to low complexity. Pro residues predominate over residues 910 to 920 (EPGPAGPPGPP). Over residues 985–995 (PPGPMGPPGLA) the composition is skewed to pro residues. Positions 997–1021 (PPGEAGREGAPGAEGAPGRDGAAGP) are enriched in low complexity. Position 1022 is a 5-hydroxylysine; partial (Lys1022). Positions 1031–1046 (AGPPGAPGAPGAPGPV) are enriched in pro residues. Pro1034, Pro1037, Pro1040, and Pro1067 each carry 4-hydroxyproline. Positions 1070-1081 (AGARGPAGPQGP) are enriched in low complexity. A compositionally biased stretch (basic and acidic residues) spans 1082–1096 (RGDKGETGEQGDRGM). Residue Lys1085 is modified to 5-hydroxylysine; partial. At Lys1097 the chain carries 5-hydroxylysine; alternate. An O-linked (Gal...) hydroxylysine; partial glycan is attached at Lys1097. 4-hydroxyproline is present on residues Pro1109, Pro1112, Pro1115, Pro1133, and Pro1148. The segment covering 1115-1139 (PGEQGPSGASGPAGPRGPPGSAGAA) has biased composition (low complexity). Pro1153 is modified (3-hydroxyproline). Residue Pro1154 is modified to 4-hydroxyproline. Positions 1166–1181 (VGPPGPPGPPGPPGPP) are enriched in pro residues. Pro1168 carries the post-translational modification 3-hydroxyproline. Pro1169 carries the 4-hydroxyproline modification. The residue at position 1171 (Pro1171) is a 3-hydroxyproline. Pro1172 bears the 4-hydroxyproline mark. At Pro1174 the chain carries 3-hydroxyproline. A 4-hydroxyproline mark is found at Pro1175, Pro1178, and Pro1181. Allysine is present on Lys1197. The propeptide at 1208 to 1453 (DDANVMRDRD…GIDIGPVCFL (246 aa)) is C-terminal propeptide. The Fibrillar collagen NC1 domain occupies 1218–1453 (LEVDTTLKSL…GIDIGPVCFL (236 aa)). 3 disulfides stabilise this stretch: Cys1248-Cys1280, Cys1288-Cys1451, and Cys1359-Cys1404. Ca(2+) contacts are provided by Asp1266, Asn1268, Gln1269, Cys1271, and Asp1274. An N-linked (GlcNAc...) asparagine glycan is attached at Asn1354.

Belongs to the fibrillar collagen family. In terms of assembly, trimers of one alpha 2(I) and two alpha 1(I) chains. In terms of processing, contains mostly 4-hydroxyproline. Proline residues at the third position of the tripeptide repeating unit (G-X-Y) are 4-hydroxylated in some or all of the chains. Contains 3-hydroxyproline. This modification occurs on the first proline residue in the sequence motif Gly-Pro-Hyp, where Hyp is 4-hydroxyproline. Post-translationally, lysine residues at the third position of the tripeptide repeating unit (G-X-Y) are 5-hydroxylated in some or all of the chains. In terms of processing, O-glycosylated on hydroxylated lysine residues. The O-linked glycan consists of a Glc-Gal disaccharide. As to expression, forms the fibrils of tendon, ligaments and bones. In bones the fibrils are mineralized with calcium hydroxyapatite.

It localises to the secreted. The protein localises to the extracellular space. Its subcellular location is the extracellular matrix. In terms of biological role, type I collagen is a member of group I collagen (fibrillar forming collagen). The chain is Collagen alpha-1(I) chain (COL1A1) from Gallus gallus (Chicken).